Here is a 109-residue protein sequence, read N- to C-terminus: Ribulose bisphosphate carboxylase small subunit (109 aa).

The protein belongs to the RuBisCO small chain family. In terms of assembly, heterohexadecamer of 8 large and 8 small subunits. Forms complexes of many stoichiometries with Raf1 and RbcL.

The protein localises to the carboxysome. Its function is as follows. RuBisCO catalyzes two reactions: the carboxylation of D-ribulose 1,5-bisphosphate, the primary event in carbon dioxide fixation, as well as the oxidative fragmentation of the pentose substrate in the photorespiration process. Both reactions occur simultaneously and in competition at the same active site. Although the small subunit is not catalytic it is essential for maximal activity. The protein is Ribulose bisphosphate carboxylase small subunit of Nostoc sp. (strain PCC 7120 / SAG 25.82 / UTEX 2576).